The primary structure comprises 1490 residues: WD repeat-containing protein 7 (1490 aa).

WD repeat units lie at residues A17 to P56, G62 to F104, I156 to Q199, L324 to G366, N404 to L443, G462 to I507, and R558 to C597. Disordered stretches follow at residues D761–S783 and G911–G945. Residues I768–S782 are compositionally biased toward basic and acidic residues. Phosphoserine is present on S935. Residues P936–G945 are compositionally biased toward polar residues. 2 WD repeats span residues P1351–I1390 and G1392–I1432. Phosphoserine is present on S1456.

This chain is WD repeat-containing protein 7 (WDR7), found in Homo sapiens (Human).